The following is a 295-amino-acid chain: Beta-lactamase-like protein 2 homolog (295 aa).

7 residues coordinate Zn(2+): His-79, His-81, Asp-83, His-84, His-141, Asp-160, and His-195.

This sequence belongs to the metallo-beta-lactamase superfamily. Glyoxalase II family.

The sequence is that of Beta-lactamase-like protein 2 homolog from Caenorhabditis elegans.